The following is a 218-amino-acid chain: tRNA (guanine-N(7)-)-methyltransferase (218 aa).

The interval 1 to 25 (MRLKNKPWANELVEEHPESALDRPN) is disordered. The span at 13–25 (VEEHPESALDRPN) shows a compositional bias: basic and acidic residues. Residues Glu-45, Glu-70, Asp-97, and Asp-119 each coordinate S-adenosyl-L-methionine. Residue Asp-119 is part of the active site. Position 123 (Lys-123) interacts with substrate. The interaction with RNA stretch occupies residues 125-130 (RHEKRR). Residues Asp-155 and 195 to 198 (TEYE) contribute to the substrate site.

It belongs to the class I-like SAM-binding methyltransferase superfamily. TrmB family.

It carries out the reaction guanosine(46) in tRNA + S-adenosyl-L-methionine = N(7)-methylguanosine(46) in tRNA + S-adenosyl-L-homocysteine. It functions in the pathway tRNA modification; N(7)-methylguanine-tRNA biosynthesis. Catalyzes the formation of N(7)-methylguanine at position 46 (m7G46) in tRNA. The polypeptide is tRNA (guanine-N(7)-)-methyltransferase (Lactobacillus delbrueckii subsp. bulgaricus (strain ATCC BAA-365 / Lb-18)).